The primary structure comprises 744 residues: Catalase-peroxidase (744 aa).

The tryptophyl-tyrosyl-methioninium (Trp-Tyr) (with M-257) cross-link spans 108–231 (WHSAGTYRIS…LAAVQMGLIY (124 aa)). The active-site Proton acceptor is His-109. The tryptophyl-tyrosyl-methioninium (Tyr-Met) (with W-108) cross-link spans 231-257 (YVNPEGPNGNPDPIAAARDIRETFRRM). A heme b-binding site is contributed by His-272. The tract at residues 353-372 (ANQWKPKDGAGAGTVPDAHD) is disordered.

Belongs to the peroxidase family. Peroxidase/catalase subfamily. Homodimer or homotetramer. It depends on heme b as a cofactor. Formation of the three residue Trp-Tyr-Met cross-link is important for the catalase, but not the peroxidase activity of the enzyme.

The enzyme catalyses H2O2 + AH2 = A + 2 H2O. It catalyses the reaction 2 H2O2 = O2 + 2 H2O. In terms of biological role, bifunctional enzyme with both catalase and broad-spectrum peroxidase activity. The chain is Catalase-peroxidase from Frankia casuarinae (strain DSM 45818 / CECT 9043 / HFP020203 / CcI3).